We begin with the raw amino-acid sequence, 1388 residues long: Rho-associated protein kinase 2 (1388 aa).

The tract at residues 1–24 (MSRPPPTGKMPGAPEAVSGDGAGA) is disordered. A Protein kinase domain is found at 92 to 354 (YDVVKVIGRG…VEEIKQHPFF (263 aa)). ATP-binding positions include 98-106 (IGRGAFGEV) and lysine 121. Aspartate 214 (proton acceptor) is an active-site residue. The AGC-kinase C-terminal domain occupies 357 to 425 (DQWNWDNIRE…YRENLLLSDS (69 aa)). Positions 363-784 (NIRETAAPVV…INELLKQKDV (422 aa)) are interaction with PPP1R12A. An interaction with NPM1 region spans residues 373-420 (PELSSDIDSSNFDDIEDDKGDVETFPIPKAFVGNQLPFIGFTYYRENL). Threonine 414 bears the Phosphothreonine; by ROCK2 mark. Residues 497-573 (ALRQLEREKA…LDETNALLRT (77 aa)) enclose the REM-1 domain. Positions 512-530 (NAEYQRKADHEADKKRNLE) are enriched in basic and acidic residues. Residues 512 to 532 (NAEYQRKADHEADKKRNLEND) are disordered. The residue at position 722 (tyrosine 722) is a Phosphotyrosine; by SRC. The RhoBD domain maps to 979–1047 (TSDVANLANE…LAEIMNRKEP (69 aa)). Residues 979–1047 (TSDVANLANE…LAEIMNRKEP (69 aa)) form an RHOA binding region. A coiled-coil region spans residues 1054–1126 (TDMRRKEKEN…EQLRSQLQAL (73 aa)). Residue serine 1137 is modified to Phosphoserine. One can recognise a PH domain in the interval 1150–1349 (ESRLEGWLSL…WVSRLVKKIP (200 aa)). A Phosphothreonine modification is found at threonine 1212. The Phorbol-ester/DAG-type zinc-finger motif lies at 1260–1315 (GHEFIPTLYHFPTNCEACMKPLWHMFKPPPALECRRCHIKCHKDHMDKKEEIIAPC). The tract at residues 1345 to 1388 (VKKIPKKPPAPDPFARSSPRTSMKIQQNQSIRRPSRQLAANKPS) is disordered. Phosphoserine is present on residues serine 1362 and serine 1374. The segment covering 1362–1376 (SPRTSMKIQQNQSIR) has biased composition (polar residues).

Belongs to the protein kinase superfamily. AGC Ser/Thr protein kinase family. As to quaternary structure, homodimer. Interacts with IRS1. Interacts with RAF1. Interacts with RHOA (activated by GTP), RHOB and RHOC. Interacts with PPP1R12A. Interacts with EP300. Interacts with CHORDC1. Interacts with BRCA2. Interacts with NPM1; this interaction enhances ROCK2 activity. Interacts with SORL1. Interacts with PJVK. Mg(2+) serves as cofactor. In terms of processing, autophosphorylated. Phosphorylation at Tyr-722 reduces its binding to RHOA and is crucial for focal adhesion dynamics. Dephosphorylation by PTPN11 stimulates its RHOA binding activity. Post-translationally, cleaved by granzyme B during apoptosis. This leads to constitutive activation of the kinase and membrane blebbing.

The protein localises to the cytoplasm. It is found in the cell membrane. It localises to the nucleus. The protein resides in the cytoskeleton. Its subcellular location is the microtubule organizing center. The protein localises to the centrosome. The catalysed reaction is L-seryl-[protein] + ATP = O-phospho-L-seryl-[protein] + ADP + H(+). It catalyses the reaction L-threonyl-[protein] + ATP = O-phospho-L-threonyl-[protein] + ADP + H(+). Activated by RHOA binding. Inhibited by Y-27632. In terms of biological role, protein kinase which is a key regulator of actin cytoskeleton and cell polarity. Involved in regulation of smooth muscle contraction, actin cytoskeleton organization, stress fiber and focal adhesion formation, neurite retraction, cell adhesion and motility via phosphorylation of ADD1, BRCA2, CNN1, EZR, DPYSL2, EP300, MSN, MYL9/MLC2, NPM1, RDX, PPP1R12A and VIM. Phosphorylates SORL1 and IRF4. Acts as a negative regulator of VEGF-induced angiogenic endothelial cell activation. Positively regulates the activation of p42/MAPK1-p44/MAPK3 and of p90RSK/RPS6KA1 during myogenic differentiation. Plays an important role in the timely initiation of centrosome duplication. Inhibits keratinocyte terminal differentiation. May regulate closure of the eyelids and ventral body wall through organization of actomyosin bundles. Plays a critical role in the regulation of spine and synaptic properties in the hippocampus. Plays an important role in generating the circadian rhythm of the aortic myofilament Ca(2+) sensitivity and vascular contractility by modulating the myosin light chain phosphorylation. This is Rho-associated protein kinase 2 (ROCK2) from Sus scrofa (Pig).